We begin with the raw amino-acid sequence, 313 residues long: Porphobilinogen deaminase (313 aa).

The residue at position 241 (C241) is an S-(dipyrrolylmethanemethyl)cysteine.

Belongs to the HMBS family. Monomer. Requires dipyrromethane as cofactor.

The enzyme catalyses 4 porphobilinogen + H2O = hydroxymethylbilane + 4 NH4(+). The protein operates within porphyrin-containing compound metabolism; protoporphyrin-IX biosynthesis; coproporphyrinogen-III from 5-aminolevulinate: step 2/4. Its function is as follows. Tetrapolymerization of the monopyrrole PBG into the hydroxymethylbilane pre-uroporphyrinogen in several discrete steps. This Sulfurimonas denitrificans (strain ATCC 33889 / DSM 1251) (Thiomicrospira denitrificans (strain ATCC 33889 / DSM 1251)) protein is Porphobilinogen deaminase.